The chain runs to 137 residues: Structural protein A137R (137 aa).

The protein belongs to the asfivirus A137R family. As to quaternary structure, interacts with host TBK1.

The protein resides in the virion. It is found in the host cytoplasm. Its function is as follows. Plays a role in the inhibition of the host innate immune response. Mechanistically, promotes the autophagy-mediated lysosomal degradation of host TBK1 and affects IRF3 nuclear translocation to block type I IFN production. The sequence is that of Structural protein A137R from Ornithodoros (relapsing fever ticks).